The chain runs to 189 residues: 3-hydroxyanthranilate 3,4-dioxygenase (189 aa).

R49 lines the O2 pocket. Fe cation-binding residues include H53, E59, and H97. E59 is a binding site for substrate. Positions 101 and 112 each coordinate substrate. Residues C127, C130, C165, and C168 each coordinate Fe cation.

It belongs to the 3-HAO family. In terms of assembly, homodimer. Fe(2+) is required as a cofactor.

It catalyses the reaction 3-hydroxyanthranilate + O2 = (2Z,4Z)-2-amino-3-carboxymuconate 6-semialdehyde. It functions in the pathway cofactor biosynthesis; NAD(+) biosynthesis; quinolinate from L-kynurenine: step 3/3. Functionally, catalyzes the oxidative ring opening of 3-hydroxyanthranilate to 2-amino-3-carboxymuconate semialdehyde, which spontaneously cyclizes to quinolinate. This Cupriavidus pinatubonensis (strain JMP 134 / LMG 1197) (Cupriavidus necator (strain JMP 134)) protein is 3-hydroxyanthranilate 3,4-dioxygenase.